We begin with the raw amino-acid sequence, 543 residues long: Chaperonin GroEL (543 aa).

ATP-binding positions include 29–32, 86–90, glycine 413, 478–480, and aspartate 494; these read TLGP, DGTTT, and NAA.

Belongs to the chaperonin (HSP60) family. As to quaternary structure, forms a cylinder of 14 subunits composed of two heptameric rings stacked back-to-back. Interacts with the co-chaperonin GroES.

The protein localises to the cytoplasm. The catalysed reaction is ATP + H2O + a folded polypeptide = ADP + phosphate + an unfolded polypeptide.. Together with its co-chaperonin GroES, plays an essential role in assisting protein folding. The GroEL-GroES system forms a nano-cage that allows encapsulation of the non-native substrate proteins and provides a physical environment optimized to promote and accelerate protein folding. In Lactobacillus johnsonii (strain CNCM I-12250 / La1 / NCC 533), this protein is Chaperonin GroEL.